The chain runs to 205 residues: Guanylate kinase (205 aa).

The Guanylate kinase-like domain maps to 6 to 184 (GLLLVVSGPS…SAKEIEGIIS (179 aa)). Residue 13–20 (GPSGAGKG) coordinates ATP.

This sequence belongs to the guanylate kinase family.

Its subcellular location is the cytoplasm. The enzyme catalyses GMP + ATP = GDP + ADP. Its function is as follows. Essential for recycling GMP and indirectly, cGMP. The polypeptide is Guanylate kinase (Clostridioides difficile (strain 630) (Peptoclostridium difficile)).